Consider the following 279-residue polypeptide: Large ribosomal subunit protein uL2 (279 aa).

The disordered stretch occupies residues 223–279 (MAMNPVDHPMGGGEGKSKSGGGRKHPKSPWGQLAKGLKTRNKKKASSKLIVRGRKSK). Positions 232-242 (MGGGEGKSKSG) are enriched in gly residues. Over residues 259-279 (LKTRNKKKASSKLIVRGRKSK) the composition is skewed to basic residues.

It belongs to the universal ribosomal protein uL2 family. Part of the 50S ribosomal subunit. Forms a bridge to the 30S subunit in the 70S ribosome.

Its function is as follows. One of the primary rRNA binding proteins. Required for association of the 30S and 50S subunits to form the 70S ribosome, for tRNA binding and peptide bond formation. It has been suggested to have peptidyltransferase activity; this is somewhat controversial. Makes several contacts with the 16S rRNA in the 70S ribosome. In Prosthecochloris aestuarii (strain DSM 271 / SK 413), this protein is Large ribosomal subunit protein uL2.